We begin with the raw amino-acid sequence, 201 residues long: MTDAPDHHATEKRLITETGVAARVAQIVEPSLEGLGFRLVRVRVTGQNGCTVQIMAERPDGTMTVEDCEAVSRTISPLLDVDDPIGRAYHLEISSPGIDRPLVRAGDFARWAGHEAKVELAVPLEGRKRFRGLIRAPEGATVRIDLPDAKEGTPASYELRLADIGEAHLVLTDDLIRESLRRGSAPAQDEEGEDEAPGAPL.

The interval 180–201 (LRRGSAPAQDEEGEDEAPGAPL) is disordered. Residues 188-201 (QDEEGEDEAPGAPL) are compositionally biased toward acidic residues.

Belongs to the RimP family.

The protein localises to the cytoplasm. In terms of biological role, required for maturation of 30S ribosomal subunits. The chain is Ribosome maturation factor RimP from Methylobacterium sp. (strain 4-46).